The primary structure comprises 362 residues: MTTVPPTRDTAAIRIWLSIVAGLIALMVLVGGATRLTESGLSIVEWKPVTGTLPPLSEQAWSDAFEAYKTIPQYRQMNAGMTLHEFKTIFWWEWAHRLLGRVIGMVYLLPFLWFLWRGAVSGPLGRRLWLIFGLGALQGAVGWWMVASGLTERTEVAPVRLATHLSLALLIFASIVWTLRRLKPRDEAEVPGRLRLTAWALVGVTFVQLYLGALVAGLRAGLVYNTWPEIDGGLIPAAANLWAHAPWWINLFENHLTVQFMHRMTAYTLLALAAWHAFDVMRAGAGRDAVRGAHRLLAAILVQAVLGIATLLMVVPISLALLHQGTALIVLTFAVLQAERLSPRRVAAVAVPQAAVAAGQAG.

Transmembrane regions (helical) follow at residues 11-31 (AAIRIWLSIVAGLIALMVLVG), 102-122 (VIGMVYLLPFLWFLWRGAVSG), 128-148 (LWLIFGLGALQGAVGWWMVAS), 159-179 (VRLATHLSLALLIFASIVWTL), and 198-218 (AWALVGVTFVQLYLGALVAGL). Position 262 (histidine 262) interacts with heme. Transmembrane regions (helical) follow at residues 264-286 (MTAYTLLALAAWHAFDVMRAGAG), 297-317 (LAAILVQAVLGIATLLMVVPI), and 318-338 (SLALLHQGTALIVLTFAVLQA). Histidine 323 contacts heme.

The protein belongs to the COX15/CtaA family. Type 2 subfamily. As to quaternary structure, interacts with CtaB. The cofactor is heme b.

It localises to the cell membrane. The enzyme catalyses Fe(II)-heme o + 2 A + H2O = Fe(II)-heme a + 2 AH2. The protein operates within porphyrin-containing compound metabolism; heme A biosynthesis; heme A from heme O: step 1/1. In terms of biological role, catalyzes the conversion of heme O to heme A by two successive hydroxylations of the methyl group at C8. The first hydroxylation forms heme I, the second hydroxylation results in an unstable dihydroxymethyl group, which spontaneously dehydrates, resulting in the formyl group of heme A. This Bradyrhizobium sp. (strain ORS 278) protein is Heme A synthase.